The chain runs to 472 residues: Cell division protein FtsP (472 aa).

A signal peptide (tat-type signal) is located at residues 1-32; sequence MSLSRRRFIQASGLALCAGGLPLQARASGAQA.

Belongs to the FtsP family. In terms of processing, predicted to be exported by the Tat system. The position of the signal peptide cleavage has not been experimentally proven.

The protein localises to the periplasm. Functionally, cell division protein that is required for growth during stress conditions. May be involved in protecting or stabilizing the divisomal assembly under conditions of stress. In Edwardsiella tarda (strain FL6-60), this protein is Cell division protein FtsP.